We begin with the raw amino-acid sequence, 442 residues long: GDP-L-galactose phosphorylase 1 (442 aa).

His-238 functions as the Tele-GMP-histidine intermediate in the catalytic mechanism.

This sequence belongs to the GDPGP1 family. In terms of assembly, interacts with TLP1. Expressed in leaves, stems, roots, flowers and siliques. Highest expression in green tissues.

Its subcellular location is the cytoplasm. It is found in the nucleus. It catalyses the reaction GDP-beta-L-galactose + phosphate = beta-L-galactose 1-phosphate + GDP + H(+). Its pathway is cofactor biosynthesis; L-ascorbate biosynthesis via GDP-alpha-D-mannose pathway; L-ascorbate from GDP-alpha-D-mannose: step 2/5. Its activity is regulated as follows. Not inhibited by dithiothreitol, N-ethylmaleimide, phenylmethane sulfonyl fluoride, ascorbate, L-galactose and L-galactonolactone. Functionally, catalyzes a reaction of the Smirnoff-Wheeler pathway, the major route to ascorbate biosynthesis in plants. Acts as a phosphorylase rather than as a transferase. Uses preferentially GDP-L-galactose and GDP-D-glucose as substrates. Lower activity with GDP-L-fucose, very low activity with GDP-D-mannose, and no activity with UDP-D-glucose, UDP-D-galactose or ADP-D-glucose. Highly specific for inorganic phosphate as the guanylyl acceptor. This Arabidopsis thaliana (Mouse-ear cress) protein is GDP-L-galactose phosphorylase 1 (VTC2).